The chain runs to 823 residues: Lon protease (823 aa).

Residues L22–H217 form the Lon N-terminal domain. G369–T376 lines the ATP pocket. In terms of domain architecture, Lon proteolytic spans K605–T786. Active-site residues include S692 and K735. Residues P788–S823 are disordered.

Belongs to the peptidase S16 family. In terms of assembly, homohexamer. Organized in a ring with a central cavity.

The protein localises to the cytoplasm. The enzyme catalyses Hydrolysis of proteins in presence of ATP.. ATP-dependent serine protease that mediates the selective degradation of mutant and abnormal proteins as well as certain short-lived regulatory proteins. Required for cellular homeostasis and for survival from DNA damage and developmental changes induced by stress. Degrades polypeptides processively to yield small peptide fragments that are 5 to 10 amino acids long. Binds to DNA in a double-stranded, site-specific manner. This chain is Lon protease, found in Geobacter metallireducens (strain ATCC 53774 / DSM 7210 / GS-15).